Reading from the N-terminus, the 364-residue chain is tRNA-specific 2-thiouridylase MnmA 2 (364 aa).

ATP-binding positions include 10 to 17 and methionine 36; that span reads GMSGGVDS. Cysteine 106 (nucleophile) is an active-site residue. Cysteine 106 and cysteine 204 are joined by a disulfide. Glycine 130 lines the ATP pocket. The tract at residues 154-156 is interaction with tRNA; that stretch reads KDQ. Residue cysteine 204 is the Cysteine persulfide intermediate of the active site. Residues 310–311 are interaction with tRNA; sequence RY.

The protein belongs to the MnmA/TRMU family.

It is found in the cytoplasm. It catalyses the reaction S-sulfanyl-L-cysteinyl-[protein] + uridine(34) in tRNA + AH2 + ATP = 2-thiouridine(34) in tRNA + L-cysteinyl-[protein] + A + AMP + diphosphate + H(+). Its function is as follows. Catalyzes the 2-thiolation of uridine at the wobble position (U34) of tRNA, leading to the formation of s(2)U34. The polypeptide is tRNA-specific 2-thiouridylase MnmA 2 (Caldanaerobacter subterraneus subsp. tengcongensis (strain DSM 15242 / JCM 11007 / NBRC 100824 / MB4) (Thermoanaerobacter tengcongensis)).